A 548-amino-acid chain; its full sequence is Fluconazole resistance protein 1 (548 aa).

The tract at residues 30–94 (SAREDETRKP…WNGPSDPENP (65 aa)) is disordered. Basic and acidic residues predominate over residues 31-51 (AREDETRKPENTDKKECKPDY). Over residues 60–73 (SCSESSTDSDSSGS) the composition is skewed to low complexity. 12 helical membrane passes run 104-124 (LVVFQIMLLTCVTYMGSSIYT), 139-159 (VVATLNLSLYVLGYGLGPIIF), 179-199 (FFFMIFQVGCATVHNIGGLIV), 203-223 (ISGILCSPSLATGGGTVADII), 230-250 (LVLGMWSAGAVAAPVLAPLLG), 261-281 (FIFWLLMWLSAATFILLAFFF), 347-367 (IAVAYGCFYLFFEAFPIVFVG), 376-396 (VGLAYMGFCVGCVLAYGLFGI), 416-436 (FLIVAMCVCWCLPLSLFLFGW), 440-460 (VHWILPVISEVFFVLAVFNIF), 476-496 (ASVFAGNGFCRASFACAFPLF), and 511-531 (VAWGSSLVGFLTLGLAIIPFI).

The protein belongs to the major facilitator superfamily.

It localises to the membrane. In terms of biological role, probable efflux transporter. Confers resistance to the azole derivative fluconazole (FCZ). This chain is Fluconazole resistance protein 1 (FLR1), found in Saccharomyces cerevisiae (strain ATCC 204508 / S288c) (Baker's yeast).